Consider the following 776-residue polypeptide: 3-isopropylmalate dehydratase (776 aa).

The [4Fe-4S] cluster site is built by Cys-357, Cys-418, and Cys-421. Over residues 482–493 the composition is skewed to basic and acidic residues; it reads SAPKVEVRHDTD. 2 disordered regions span residues 482–518 and 525–544; these read SAPK…SDVA and DIPV…SADA. The segment covering 527–538 has biased composition (polar residues); sequence PVSNSSTQSPGS.

This sequence belongs to the aconitase/IPM isomerase family. In terms of assembly, monomer. Requires [4Fe-4S] cluster as cofactor.

It catalyses the reaction (2R,3S)-3-isopropylmalate = (2S)-2-isopropylmalate. The protein operates within amino-acid biosynthesis; L-leucine biosynthesis; L-leucine from 3-methyl-2-oxobutanoate: step 2/4. Its function is as follows. Catalyzes the isomerization between 2-isopropylmalate and 3-isopropylmalate, via the formation of 2-isopropylmaleate. The chain is 3-isopropylmalate dehydratase (LEU1) from Eremothecium gossypii (strain ATCC 10895 / CBS 109.51 / FGSC 9923 / NRRL Y-1056) (Yeast).